Here is a 74-residue protein sequence, read N- to C-terminus: ARGAGLLSQDWSAVEDLLAQMSLPEADAQREAEVVSVATGGRLNLESVDPPNNIPLRERKAGCKNFYWKGFTSC.

Residues 1 to 46 constitute a propeptide that is removed on maturation; sequence ARGAGLLSQDWSAVEDLLAQMSLPEADAQREAEVVSVATGGRLNLE. An intrachain disulfide couples cysteine 63 to cysteine 74.

The protein belongs to the somatostatin family.

It is found in the secreted. In terms of biological role, somatostatin inhibits the release of somatotropin. This Myoxocephalus scorpius (Shorthorn sculpin) protein is Somatostatin-2 (sst2).